The following is a 100-amino-acid chain: Insertion element IS600 uncharacterized 11 kDa protein (100 aa).

Belongs to the transposase 8 family.

This is Insertion element IS600 uncharacterized 11 kDa protein from Shigella sonnei.